The following is a 372-amino-acid chain: uncharacterized protein (372 aa).

A helical transmembrane segment spans residues 224–244 (GSTVGVVIGVVIVIFIGFIII). Residue Ser-329 is modified to Phosphoserine.

The protein resides in the vacuole membrane. This is an uncharacterized protein from Saccharomyces cerevisiae (strain ATCC 204508 / S288c) (Baker's yeast).